The chain runs to 1159 residues: WASH complex subunit 5 (1159 aa).

Residue Ser-917 is modified to Phosphoserine.

Belongs to the strumpellin family. Component of the WASH core complex also described as WASH regulatory complex (SHRC) composed of WASH (WASHC1, WASH2P or WASH3P), WASHC2 (WASHC2A or WASHC2C), WASHC3, WASHC4 and WASHC5. The WASH core complex associates via WASHC2 with the F-actin-capping protein dimer (formed by CAPZA1, CAPZA2 or CAPZA3 and CAPZB) in a transient or substoichiometric manner which was initially described as WASH complex. Interacts with VCP, PI4K2A.

Its subcellular location is the cytoplasm. It localises to the cytosol. The protein resides in the endoplasmic reticulum. It is found in the early endosome. Functionally, acts as a component of the WASH core complex that functions as a nucleation-promoting factor (NPF) at the surface of endosomes, where it recruits and activates the Arp2/3 complex to induce actin polymerization, playing a key role in the fission of tubules that serve as transport intermediates during endosome sorting. May be involved in axonal outgrowth. Involved in cellular localization of ADRB2. Involved in cellular trafficking of BLOC-1 complex cargos such as ATP7A and VAMP7. The polypeptide is WASH complex subunit 5 (Pongo abelii (Sumatran orangutan)).